Reading from the N-terminus, the 502-residue chain is MAEYTHYFIQYNLTDIFYEDVNIEKYSCSICYESVYKKEIYQCKEIHWFCKTCWAESLFKKKECMICRCIVKSISELSRNRFIEQDFLNIKVNCPNSFKYIDENKNNNNKIKDLENGCKDIITIGEIEKHLKQCKFTHIKCKFIGCNKIIRLNQVEKHEKEQCEFRLEYCRYCDTDGITSRSLENHYKECPKFIVKCSENGCTVQLERSQLESHIEKQCQMVMIDCPYKIYGCEQSNRFPKSNLTQHLSSINHTLAMGSMIESQSLQIKETNIKYENLLNKINKLEQLETESKCDQLYDKFYQFESKIDKKLNNLQLDLYPKDNQQPQQKEQKEQKEQKEQQERIKFDDLFEKVSKVNSYFINGCLLKYKNRWSISNYLTESRKYRKITSPSFKIYDKKFKLVIYPQGKDDGSYTSLFLKSDSINPIKVFYKFVLLNFKDESKNLIFKNKSIMDKEKSVGCHYFIKSTEPGKKPEVWLKDDSLVIDFSIEVNINNDIKPLES.

Residues 28–68 (CSICYESVYKKEIYQCKEIHWFCKTCWAESLFKKKECMICR) form an RING-type; degenerate zinc finger. TRAF-type zinc fingers lie at residues 129 to 183 (KHLK…SRSL) and 185 to 243 (NHYK…PKSN). Residues 261-295 (IESQSLQIKETNIKYENLLNKINKLEQLETESKCD) adopt a coiled-coil conformation. In terms of domain architecture, MATH spans 368–489 (KYKNRWSISN…DDSLVIDFSI (122 aa)).

Belongs to the TNF receptor-associated factor family. A subfamily.

It localises to the cytoplasm. Functionally, probable adapter protein and signal transducer that links members of the tumor necrosis factor receptor family to different signaling pathways by association with the receptor cytoplasmic domain and kinases. The polypeptide is TNF receptor-associated factor family protein DDB_G0268444 (Dictyostelium discoideum (Social amoeba)).